Here is a 240-residue protein sequence, read N- to C-terminus: MNDLTITLKQAAKEMEFDLTENQTLAFEKYYNLLIEWNKNINLTAIIEPKEVALKHFIDSLTCLKILEIPCQANVLDIGTGAGFPGIPIKIFRPDINVTLMDSLNKRVNFLNEVIKKLGLTNICAIHDRAEDFGQKKEHREKYDYVLSRAVAKLKVLSEYCLPCTKLDGYFISQKGPDIDEEVKEASKAIEVLGGSLLNIHKLQLPFINDGRSLVVIKKVKQTPSVYPRKAGIPAKKPIA.

S-adenosyl-L-methionine-binding positions include Gly79, Phe84, 130 to 131 (AE), and Arg149.

It belongs to the methyltransferase superfamily. RNA methyltransferase RsmG family.

It is found in the cytoplasm. In terms of biological role, specifically methylates the N7 position of a guanine in 16S rRNA. The protein is Ribosomal RNA small subunit methyltransferase G of Desulforamulus reducens (strain ATCC BAA-1160 / DSM 100696 / MI-1) (Desulfotomaculum reducens).